The following is a 319-amino-acid chain: HTH-type transcriptional regulator YidZ (319 aa).

The HTH lysR-type domain occupies 8–65 (LDLNLLLCLQLLMQERSVTKAAKRMNVTPSAVSKSLAKLRAWFDDPLFVNTPLGLAPT). Positions 25-44 (VTKAAKRMNVTPSAVSKSLA) form a DNA-binding region, H-T-H motif.

Belongs to the LysR transcriptional regulatory family.

Its function is as follows. Involved in anaerobic NO protection. This is HTH-type transcriptional regulator YidZ from Salmonella typhi.